We begin with the raw amino-acid sequence, 156 residues long: Large ribosomal subunit protein uL22 (156 aa).

This sequence belongs to the universal ribosomal protein uL22 family. Part of the 50S ribosomal subunit.

In terms of biological role, this protein binds specifically to 23S rRNA. It makes multiple contacts with different domains of the 23S rRNA in the assembled 50S subunit and ribosome. Functionally, the globular domain of the protein is located near the polypeptide exit tunnel on the outside of the subunit, while an extended beta-hairpin is found that lines the wall of the exit tunnel in the center of the 70S ribosome. In Halobacterium salinarum (strain ATCC 700922 / JCM 11081 / NRC-1) (Halobacterium halobium), this protein is Large ribosomal subunit protein uL22.